The following is a 132-amino-acid chain: MGNDTIANMITSVRNANLGKEETVRVPATNINRSIGKILLQEGFVKNLGELREGTNHFMILTLKYRGRKREPYITTLRRISKPGLRLYYNYKKIPKVLGGMGVVIPSTSCGTMTDREARQKQIGGEILCYVW.

This sequence belongs to the universal ribosomal protein uS8 family. As to quaternary structure, part of the 30S ribosomal subunit.

It localises to the plastid. The protein localises to the chloroplast. In terms of biological role, one of the primary rRNA binding proteins, it binds directly to 16S rRNA central domain where it helps coordinate assembly of the platform of the 30S subunit. The polypeptide is Small ribosomal subunit protein uS8c (rps8) (Huperzia lucidula (Shining clubmoss)).